A 389-amino-acid polypeptide reads, in one-letter code: tRNA N(3)-cytidine methyltransferase METTL2 (389 aa).

Residues 1–20 (MAASFPEGVPETEDGKRPQF) are disordered. Residues W78, Y82, G181, D206, D232, L233, and I253 each coordinate S-adenosyl-L-methionine.

This sequence belongs to the methyltransferase superfamily. METL family. Monomer. Interacts with DALRD3.

Its subcellular location is the cytoplasm. The catalysed reaction is cytidine(32) in tRNA(Thr) + S-adenosyl-L-methionine = N(3)-methylcytidine(32) in tRNA(Thr) + S-adenosyl-L-homocysteine + H(+). It carries out the reaction cytidine(32) in tRNA(Arg)(CCU) + S-adenosyl-L-methionine = N(3)-methylcytidine(32) in tRNA(Arg)(CCU) + S-adenosyl-L-homocysteine + H(+). S-adenosyl-L-methionine-dependent methyltransferase that mediates N(3)-methylcytidine modification of residue 32 of the tRNA anticodon loop of tRNA(Thr)(UGU) and tRNA(Arg)(CCU). N(3)-methylcytidine methylation by METTL2 requires the N6-threonylcarbamoylation of tRNA (t6A37) by the EKC/KEOPS complex as prerequisite. This chain is tRNA N(3)-cytidine methyltransferase METTL2, found in Mus musculus (Mouse).